The chain runs to 122 residues: UPF0102 protein Smed_3545 (122 aa).

This sequence belongs to the UPF0102 family.

The chain is UPF0102 protein Smed_3545 from Sinorhizobium medicae (strain WSM419) (Ensifer medicae).